A 101-amino-acid polypeptide reads, in one-letter code: Carboxysome shell vertex protein CcmL (101 aa).

In terms of domain architecture, BMV spans 1–84 (MQIAKVRGTV…VDAAVVAIID (84 aa)).

This sequence belongs to the CcmL/EutN family. CcmL subfamily. Homopentamer. Interacts with full-length CcmM.

It localises to the carboxysome. Its function is as follows. Probably forms vertices in the carboxysome, a polyhedral inclusion where RuBisCO (ribulose bisphosphate carboxylase, rbcL-rbcS) is sequestered. Has been modeled to induce curvature upon insertion into an otherwise flat hexagonal molecular layer of CcmK subunits. This chain is Carboxysome shell vertex protein CcmL, found in Nostoc sp. (strain PCC 7120 / SAG 25.82 / UTEX 2576).